The chain runs to 527 residues: Pyruvate kinase 2, cytosolic (527 aa).

Arginine 58 serves as a coordination point for substrate. Aspartate 60, serine 62, aspartate 92, and threonine 93 together coordinate K(+). 60–63 provides a ligand contact to ATP; it reads DFSW. Substrate is bound at residue lysine 256. Position 258 (glutamate 258) interacts with Mg(2+). Substrate contacts are provided by glycine 281, asparagine 282, and threonine 313. Asparagine 282 provides a ligand contact to Mg(2+).

The protein belongs to the pyruvate kinase family. As to quaternary structure, homotetramer. Requires Mg(2+) as cofactor. K(+) is required as a cofactor.

It localises to the cytoplasm. The protein localises to the cytosol. It catalyses the reaction pyruvate + ATP = phosphoenolpyruvate + ADP + H(+). It participates in carbohydrate degradation; glycolysis; pyruvate from D-glyceraldehyde 3-phosphate: step 5/5. Its function is as follows. Key regulatory enzyme of the glycolytic pathway that catalyzes the final step of glycolysis, converting ADP and phosphoenolpyruvate (PEP) to ATP and pyruvate by essentially irreversible transphosphorylation. This is Pyruvate kinase 2, cytosolic from Oryza sativa subsp. indica (Rice).